The sequence spans 155 residues: Gas vesicle protein K (155 aa).

Belongs to the gas vesicle GvpK family.

The protein resides in the gas vesicle. In terms of biological role, might be involved in nucleating gas vesicle formation. Gas vesicles (GV) are hollow, gas filled proteinaceous nanostructures. During planktonic growth they allow positioning of the organism at a favorable depth for light or nutrient acquisition. Its function is as follows. Cluster expression in E.coli (gvpA1-gvpA2-gvpC-gvpN-gvpJ-gvpK-gvpF-gvpG-gvpV-gvpW) allows cells to float and produces irregularly shaped gas vesicles. The polypeptide is Gas vesicle protein K (Nostoc sp. (strain PCC 7120 / SAG 25.82 / UTEX 2576)).